Reading from the N-terminus, the 141-residue chain is Nucleoside diphosphate kinase (141 aa).

The ATP site is built by Lys-11, Phe-59, Arg-87, Thr-93, Arg-104, and Asn-114. His-117 serves as the catalytic Pros-phosphohistidine intermediate.

It belongs to the NDK family. In terms of assembly, homotetramer. Mg(2+) serves as cofactor.

Its subcellular location is the cytoplasm. The enzyme catalyses a 2'-deoxyribonucleoside 5'-diphosphate + ATP = a 2'-deoxyribonucleoside 5'-triphosphate + ADP. The catalysed reaction is a ribonucleoside 5'-diphosphate + ATP = a ribonucleoside 5'-triphosphate + ADP. Functionally, major role in the synthesis of nucleoside triphosphates other than ATP. The ATP gamma phosphate is transferred to the NDP beta phosphate via a ping-pong mechanism, using a phosphorylated active-site intermediate. The polypeptide is Nucleoside diphosphate kinase (Nitrosospira multiformis (strain ATCC 25196 / NCIMB 11849 / C 71)).